Reading from the N-terminus, the 90-residue chain is Probable Fe(2+)-trafficking protein (90 aa).

The protein belongs to the Fe(2+)-trafficking protein family.

Functionally, could be a mediator in iron transactions between iron acquisition and iron-requiring processes, such as synthesis and/or repair of Fe-S clusters in biosynthetic enzymes. This Bordetella bronchiseptica (strain ATCC BAA-588 / NCTC 13252 / RB50) (Alcaligenes bronchisepticus) protein is Probable Fe(2+)-trafficking protein.